The sequence spans 333 residues: Phosphate acyltransferase (333 aa).

This sequence belongs to the PlsX family. In terms of assembly, homodimer. Probably interacts with PlsY.

It localises to the cytoplasm. The catalysed reaction is a fatty acyl-[ACP] + phosphate = an acyl phosphate + holo-[ACP]. It participates in lipid metabolism; phospholipid metabolism. In terms of biological role, catalyzes the reversible formation of acyl-phosphate (acyl-PO(4)) from acyl-[acyl-carrier-protein] (acyl-ACP). This enzyme utilizes acyl-ACP as fatty acyl donor, but not acyl-CoA. The protein is Phosphate acyltransferase of Ligilactobacillus salivarius (strain UCC118) (Lactobacillus salivarius).